The chain runs to 328 residues: Cell division protein ZipA (328 aa).

Over 1 to 4 (MDLN) the chain is Periplasmic. The chain crosses the membrane as a helical span at residues 5–25 (TILIIVGIVALVALIVHGLWS). Residues 26-328 (NRREKSKYFD…NAEQAYLARV (303 aa)) lie on the Cytoplasmic side of the membrane. A disordered region spans residues 44 to 82 (SLTSRSHTQEEMVQPNNISPNTYVENGHTPIPQPTTEKL). The segment covering 57-67 (QPNNISPNTYV) has biased composition (polar residues).

Belongs to the ZipA family. Interacts with FtsZ via their C-terminal domains.

Its subcellular location is the cell inner membrane. Its function is as follows. Essential cell division protein that stabilizes the FtsZ protofilaments by cross-linking them and that serves as a cytoplasmic membrane anchor for the Z ring. Also required for the recruitment to the septal ring of downstream cell division proteins. This chain is Cell division protein ZipA, found in Haemophilus influenzae (strain ATCC 51907 / DSM 11121 / KW20 / Rd).